Reading from the N-terminus, the 1064-residue chain is Leucine--tRNA ligase (1064 aa).

Residues 1 to 25 (MARAMSETAEPGARTGAADTTVAPT) are disordered. The short motif at 106–117 (PYPSGSGLHVGH) is the 'HIGH' region element. Residues 435 to 456 (GRPGGGTEPADTAGPEAGADPA) are disordered. Residues 831–835 (KMGKS) carry the 'KMSKS' region motif. Lysine 834 contacts ATP.

This sequence belongs to the class-I aminoacyl-tRNA synthetase family.

The protein localises to the cytoplasm. It catalyses the reaction tRNA(Leu) + L-leucine + ATP = L-leucyl-tRNA(Leu) + AMP + diphosphate. The protein is Leucine--tRNA ligase of Frankia casuarinae (strain DSM 45818 / CECT 9043 / HFP020203 / CcI3).